Consider the following 122-residue polypeptide: Biogenesis of lysosome-related organelles complex 1 subunit BLS1 (122 aa).

A Phosphoserine modification is found at serine 33.

Belongs to the BLOC1S1 family. Component of the biogenesis of lysosome-related organelles complex-1 (BLOC-1) composed of at least BLI1, BLS1, CNL1, KXD1, SNN1 and VAB2.

It is found in the endosome. Component of the biogenesis of lysosome-related organelles complex-1 (BLOC-1), a complex involved in endosomal cargo sorting. This chain is Biogenesis of lysosome-related organelles complex 1 subunit BLS1 (BLS1), found in Saccharomyces cerevisiae (strain YJM789) (Baker's yeast).